Reading from the N-terminus, the 504-residue chain is Cytochrome P450 4A25 (504 aa).

2 helical membrane passes run 6–26 (LASASGLLQVASLLGLLLLLL) and 110–130 (APVLYRLLIPWIGCGLLLLNG). Residue C451 coordinates heme.

It belongs to the cytochrome P450 family. The cofactor is heme.

The protein resides in the endoplasmic reticulum membrane. The enzyme catalyses an omega-methyl-long-chain fatty acid + reduced [NADPH--hemoprotein reductase] + O2 = an omega-hydroxy-long-chain fatty acid + oxidized [NADPH--hemoprotein reductase] + H2O + H(+). In terms of biological role, catalyzes the omega- and (omega-1)-hydroxylation of various fatty acids such as laurate and palmitate. Has no activity toward taurochenodeoxycholic acid. The chain is Cytochrome P450 4A25 (CYP4A25) from Sus scrofa (Pig).